The primary structure comprises 170 residues: Lipocalin Cav p 2.0101 (170 aa).

A signal peptide spans 1-16 (MMQILLLALAVSLACA). 2 disulfide bridges follow: C56–C60 and C75–C168.

It belongs to the calycin superfamily. Lipocalin family. Not N-linked glycosylated. Expressed in harderian gland (at protein level). Expressed in hair (at protein level). Expressed in submaxillary gland and harderian gland.

Its subcellular location is the secreted. The chain is Lipocalin Cav p 2.0101 (Lcncavp2) from Cavia porcellus (Guinea pig).